A 596-amino-acid polypeptide reads, in one-letter code: Elongation factor 4 (596 aa).

The tr-type G domain occupies 2–183 (ENIRNFSIIA…AIIERIPAPS (182 aa)). Residues 14 to 19 (DHGKST) and 130 to 133 (NKID) each bind GTP.

The protein belongs to the TRAFAC class translation factor GTPase superfamily. Classic translation factor GTPase family. LepA subfamily.

Its subcellular location is the cell inner membrane. The enzyme catalyses GTP + H2O = GDP + phosphate + H(+). Functionally, required for accurate and efficient protein synthesis under certain stress conditions. May act as a fidelity factor of the translation reaction, by catalyzing a one-codon backward translocation of tRNAs on improperly translocated ribosomes. Back-translocation proceeds from a post-translocation (POST) complex to a pre-translocation (PRE) complex, thus giving elongation factor G a second chance to translocate the tRNAs correctly. Binds to ribosomes in a GTP-dependent manner. The sequence is that of Elongation factor 4 from Nitratiruptor sp. (strain SB155-2).